The following is a 378-amino-acid chain: Chaperone protein DnaJ 1 (378 aa).

Residues 4 to 68 form the J domain; sequence DYYGILGVDR…DKRRIVDMGG (65 aa). Residues 129–211 form a CR-type zinc finger; that stretch reads GVKKDLTLDT…CAGDGRVRAR (83 aa). The Zn(2+) site is built by Cys-142, Cys-145, Cys-159, Cys-162, Cys-185, Cys-188, Cys-199, and Cys-202. CXXCXGXG motif repeat units lie at residues 142-149, 159-166, 185-192, and 199-206; these read CSKCHGSG, CGTCHGSG, CHTCNGTG, and CDECAGDG.

Belongs to the DnaJ family. Homodimer. Zn(2+) is required as a cofactor.

It is found in the cytoplasm. In terms of biological role, participates actively in the response to hyperosmotic and heat shock by preventing the aggregation of stress-denatured proteins and by disaggregating proteins, also in an autonomous, DnaK-independent fashion. Unfolded proteins bind initially to DnaJ; upon interaction with the DnaJ-bound protein, DnaK hydrolyzes its bound ATP, resulting in the formation of a stable complex. GrpE releases ADP from DnaK; ATP binding to DnaK triggers the release of the substrate protein, thus completing the reaction cycle. Several rounds of ATP-dependent interactions between DnaJ, DnaK and GrpE are required for fully efficient folding. Also involved, together with DnaK and GrpE, in the DNA replication of plasmids through activation of initiation proteins. This is Chaperone protein DnaJ 1 from Corynebacterium efficiens (strain DSM 44549 / YS-314 / AJ 12310 / JCM 11189 / NBRC 100395).